A 272-amino-acid polypeptide reads, in one-letter code: MAQITMSDMLKAGLHFGHQTRRWNPKMKQFILTQRNGIHIINLFKSLDMIDKAYDFIKATVAHNGTVLFVGTKKQAQEAVSAQATRVNMPYVSERWLGGMLTNFQTVSKRVSRLKELEEMDFTDVHGSGLTKKELLLLEREKDKLAKQLGGIRNMNRTPSAMFVVDVNKEALAVEEAHKLGIPVVAIVDTNADPESVEYPIAANDDAIRGIELLTSLMADAVAEGLLERSGKAAKAEGEAEQPMAAWEKELLTEGAPAAEAPAEAEGETKAE.

Positions 251–272 (LLTEGAPAAEAPAEAEGETKAE) are disordered. Positions 253 to 264 (TEGAPAAEAPAE) are enriched in low complexity.

This sequence belongs to the universal ribosomal protein uS2 family.

The chain is Small ribosomal subunit protein uS2 from Bifidobacterium adolescentis (strain ATCC 15703 / DSM 20083 / NCTC 11814 / E194a).